A 288-amino-acid polypeptide reads, in one-letter code: Energy-coupling factor transporter ATP-binding protein EcfA2 (288 aa).

An ABC transporter domain is found at 3-245; it reads IEFKNVDYIY…PDWLKKHFLD (243 aa). 40 to 47 lines the ATP pocket; that stretch reads GHTGSGKS.

The protein belongs to the ABC transporter superfamily. Energy-coupling factor EcfA family. In terms of assembly, forms a stable energy-coupling factor (ECF) transporter complex composed of 2 membrane-embedded substrate-binding proteins (S component), 2 ATP-binding proteins (A component) and 2 transmembrane proteins (T component).

The protein resides in the cell membrane. Its function is as follows. ATP-binding (A) component of a common energy-coupling factor (ECF) ABC-transporter complex. Unlike classic ABC transporters this ECF transporter provides the energy necessary to transport a number of different substrates. The protein is Energy-coupling factor transporter ATP-binding protein EcfA2 of Lactobacillus gasseri (strain ATCC 33323 / DSM 20243 / BCRC 14619 / CIP 102991 / JCM 1131 / KCTC 3163 / NCIMB 11718 / NCTC 13722 / AM63).